A 548-amino-acid polypeptide reads, in one-letter code: Pentatricopeptide repeat-containing protein At1g62680, mitochondrial (548 aa).

The N-terminal 43 residues, Met1–Ala43, are a transit peptide targeting the mitochondrion. PPR repeat units lie at residues Ser84–Asn118, Asp119–Pro153, Asp154–Pro188, Asp189–Pro223, Asn224–Pro258, Asn259–Pro293, Asp294–Ala328, Asp329–Ser363, Asn364–Pro398, Asp399–Leu433, Asp434–Pro468, and Asp469–Lys503.

The protein belongs to the PPR family. P subfamily.

It is found in the mitochondrion. The chain is Pentatricopeptide repeat-containing protein At1g62680, mitochondrial from Arabidopsis thaliana (Mouse-ear cress).